The sequence spans 503 residues: Potassium voltage-gated channel subfamily V member 1 (503 aa).

2 disordered regions span residues 1–20 (MDLS…DSGS) and 171–192 (KKDT…KGPC). The Cytoplasmic portion of the chain corresponds to 3–213 (LSPRNRPLLD…EKPGSSTAAR (211 aa)). Residues 10-20 (LLDSSSLDSGS) show a composition bias toward low complexity. Over residues 171–187 (KKDTDDQESQHESEQDF) the composition is skewed to basic and acidic residues. The helical transmembrane segment at 214 to 234 (IFGVISIIFVAVSIVNMALMS) threads the bilayer. Over 235–241 (AELSWLN) the chain is Extracellular. A helical membrane pass occupies residues 242 to 262 (LQLLEILEYVCISWFTGEFVL). Over 263–279 (RFLCVKDRCHFLRKVPN) the chain is Cytoplasmic. A helical transmembrane segment spans residues 280–300 (IIDLLAILPFYITLLVESLSG). Residues 301 to 312 (SHTTQELENVGR) are Extracellular-facing. A helical; Voltage-sensor transmembrane segment spans residues 313–334 (LVQVLRLLRALRMLKLGRHSTG). The Cytoplasmic portion of the chain corresponds to 335 to 348 (LRSLGMTITQCYEE). The chain crosses the membrane as a helical span at residues 349–369 (VGLLLLFLSVGISIFSTIEYF). Residues 395-400 (TVGYGD) carry the Selectivity filter motif. Residues 410-430 (IVAFMCILSGILVLALPIAII) form a helical membrane-spanning segment. Residues 431–503 (NDRFSACYFT…RSSGGDDFWF (73 aa)) are Cytoplasmic-facing.

The protein belongs to the potassium channel family. V (TC 1.A.1.2) subfamily. Kv8.1/KCNV1 sub-subfamily. In terms of assembly, heteromultimer with KCNB1 and KCNB2. Interacts with KCNC4 and KCND1.

The protein resides in the cell membrane. Potassium channel subunit that does not form functional channels by itself. Modulates KCNB1 and KCNB2 channel activity by shifting the threshold for inactivation to more negative values and by slowing the rate of inactivation. Can down-regulate the channel activity of KCNB1, KCNB2, KCNC4 and KCND1, possibly by trapping them in intracellular membranes. The sequence is that of Potassium voltage-gated channel subfamily V member 1 (Kcnv1) from Mus musculus (Mouse).